Consider the following 709-residue polypeptide: ATP-binding cassette sub-family F member 3 (709 aa).

Position 2 is an N-acetylalanine (alanine 2). Serine 83 carries the post-translational modification Phosphoserine. Positions 129 to 143 are enriched in basic and acidic residues; sequence RLKAKQEKRSEKDTL. Residues 129 to 171 form a disordered region; the sequence is RLKAKQEKRSEKDTLKTSNPLVLEEASASQAGSRKESRLESSG. Serine 155, serine 157, and serine 161 each carry phosphoserine. Residues 161–171 are compositionally biased toward basic and acidic residues; the sequence is SRKESRLESSG. 2 consecutive ABC transporter domains span residues 178-424 and 492-707; these read VRIE…LNQQ and LQLD…RREG. An ATP-binding site is contributed by 210 to 217; sequence GRNGLGKT. The residue at position 283 (serine 283) is a Phosphoserine. Residue 525 to 532 participates in ATP binding; the sequence is GENGAGKS.

It belongs to the ABC transporter superfamily. ABCF family. EF3 subfamily.

Its function is as follows. Displays an antiviral effect against flaviviruses such as west Nile virus (WNV) in the presence of OAS1B. In Homo sapiens (Human), this protein is ATP-binding cassette sub-family F member 3 (ABCF3).